A 289-amino-acid polypeptide reads, in one-letter code: 33 kDa chaperonin (289 aa).

Intrachain disulfides connect Cys230–Cys232 and Cys263–Cys266.

The protein belongs to the HSP33 family. Under oxidizing conditions two disulfide bonds are formed involving the reactive cysteines. Under reducing conditions zinc is bound to the reactive cysteines and the protein is inactive.

Its subcellular location is the cytoplasm. Its function is as follows. Redox regulated molecular chaperone. Protects both thermally unfolding and oxidatively damaged proteins from irreversible aggregation. Plays an important role in the bacterial defense system toward oxidative stress. The polypeptide is 33 kDa chaperonin (Shigella flexneri serotype 5b (strain 8401)).